The sequence spans 647 residues: Meiotically up-regulated protein C8C9.04 (647 aa).

Disordered stretches follow at residues 1–241 and 387–647; these read MTTN…ELKP and RAQQ…KLFH. Residues 29–46 show a composition bias toward polar residues; sequence KSTNAVEQNNNSSQASVT. The span at 49-67 shows a compositional bias: basic residues; sequence NKKKAAKRAKKKAAKKKKQ. Positions 92 to 103 are enriched in polar residues; it reads TILQEPGFTQTI. Over residues 134-145 the composition is skewed to low complexity; sequence PSASTSTAVPTT. Polar residues predominate over residues 146-155; it reads EARNTSITEP. Positions 156 to 177 are enriched in low complexity; that stretch reads ANSPSSSSSSASTKSTATTQSA. Residues Ser-162 and Ser-165 each carry the phosphoserine modification. Thr-168 bears the Phosphothreonine mark. Positions 193–215 are enriched in polar residues; sequence QLGNSPASITSKPATTSAAQPSS. Ser-197 and Ser-200 each carry phosphoserine. The span at 232-241 shows a compositional bias: basic and acidic residues; that stretch reads AEKEIPELKP. Composition is skewed to polar residues over residues 390-406, 413-432, and 488-508; these read QPEQYESSVVQEATETV, VSSTVKNEVNVPSTIPTESE, and PSSTGQEPTTPSTPAKSAQSS. Residue Ser-396 is modified to Phosphoserine. A phosphoserine mark is found at Ser-489 and Ser-490. Thr-491 bears the Phosphothreonine mark. Phosphoserine is present on residues Ser-515, Ser-519, and Ser-523. Residues 518–530 show a composition bias toward low complexity; it reads ASAPSSPGTTSAA. Positions 561–589 are enriched in polar residues; sequence GSATTIPSPGSATTKPTPGSATTKPTPVS. Residues 596–613 are compositionally biased toward low complexity; that stretch reads AGTTKPAPAAGATATAEN. The span at 633-647 shows a compositional bias: basic residues; the sequence is SWFKRMKKSFGKLFH.

In terms of biological role, has a role in meiosis and sporulation. In Schizosaccharomyces pombe (strain 972 / ATCC 24843) (Fission yeast), this protein is Meiotically up-regulated protein C8C9.04.